A 1400-amino-acid chain; its full sequence is DNA-directed RNA polymerase subunit beta' (1400 aa).

The Zn(2+) site is built by Cys70, Cys72, Cys85, and Cys88. Mg(2+) contacts are provided by Asp460, Asp462, and Asp464. Zn(2+) is bound by residues Cys814, Cys888, Cys895, and Cys898.

The protein belongs to the RNA polymerase beta' chain family. As to quaternary structure, the RNAP catalytic core consists of 2 alpha, 1 beta, 1 beta' and 1 omega subunit. When a sigma factor is associated with the core the holoenzyme is formed, which can initiate transcription. The cofactor is Mg(2+). It depends on Zn(2+) as a cofactor.

The enzyme catalyses RNA(n) + a ribonucleoside 5'-triphosphate = RNA(n+1) + diphosphate. DNA-dependent RNA polymerase catalyzes the transcription of DNA into RNA using the four ribonucleoside triphosphates as substrates. The sequence is that of DNA-directed RNA polymerase subunit beta' from Methylococcus capsulatus (strain ATCC 33009 / NCIMB 11132 / Bath).